The sequence spans 209 residues: Uracil phosphoribosyltransferase (209 aa).

Residues Arg-79, Arg-104, and 131 to 139 (DPMLATGAS) each bind 5-phospho-alpha-D-ribose 1-diphosphate. Uracil contacts are provided by residues Ile-194 and 199–201 (GDA). Asp-200 provides a ligand contact to 5-phospho-alpha-D-ribose 1-diphosphate.

This sequence belongs to the UPRTase family. Mg(2+) is required as a cofactor.

The catalysed reaction is UMP + diphosphate = 5-phospho-alpha-D-ribose 1-diphosphate + uracil. It participates in pyrimidine metabolism; UMP biosynthesis via salvage pathway; UMP from uracil: step 1/1. With respect to regulation, allosterically activated by GTP. In terms of biological role, catalyzes the conversion of uracil and 5-phospho-alpha-D-ribose 1-diphosphate (PRPP) to UMP and diphosphate. This Staphylococcus saprophyticus subsp. saprophyticus (strain ATCC 15305 / DSM 20229 / NCIMB 8711 / NCTC 7292 / S-41) protein is Uracil phosphoribosyltransferase.